Reading from the N-terminus, the 255-residue chain is DNA repair protein RecO (255 aa).

This sequence belongs to the RecO family.

In terms of biological role, involved in DNA repair and RecF pathway recombination. The sequence is that of DNA repair protein RecO from Bacillus velezensis (strain DSM 23117 / BGSC 10A6 / LMG 26770 / FZB42) (Bacillus amyloliquefaciens subsp. plantarum).